Consider the following 451-residue polypeptide: 3-phosphoshikimate 1-carboxyvinyltransferase (451 aa).

Residues lysine 28, serine 29, and arginine 33 each coordinate 3-phosphoshikimate. Residue lysine 28 participates in phosphoenolpyruvate binding. The phosphoenolpyruvate site is built by glycine 105 and arginine 133. Serine 178, glutamine 180, aspartate 331, and lysine 358 together coordinate 3-phosphoshikimate. Glutamine 180 is a binding site for phosphoenolpyruvate. Aspartate 331 functions as the Proton acceptor in the catalytic mechanism. Residues arginine 362 and arginine 406 each contribute to the phosphoenolpyruvate site.

This sequence belongs to the EPSP synthase family. Monomer.

The protein resides in the cytoplasm. The catalysed reaction is 3-phosphoshikimate + phosphoenolpyruvate = 5-O-(1-carboxyvinyl)-3-phosphoshikimate + phosphate. The protein operates within metabolic intermediate biosynthesis; chorismate biosynthesis; chorismate from D-erythrose 4-phosphate and phosphoenolpyruvate: step 6/7. Its function is as follows. Catalyzes the transfer of the enolpyruvyl moiety of phosphoenolpyruvate (PEP) to the 5-hydroxyl of shikimate-3-phosphate (S3P) to produce enolpyruvyl shikimate-3-phosphate and inorganic phosphate. This chain is 3-phosphoshikimate 1-carboxyvinyltransferase, found in Rhodospirillum rubrum (strain ATCC 11170 / ATH 1.1.1 / DSM 467 / LMG 4362 / NCIMB 8255 / S1).